A 326-amino-acid chain; its full sequence is Beta-1,3-galactosyltransferase 1 (326 aa).

At 1-6 (MASKVS) the chain is on the cytoplasmic side. A helical; Signal-anchor for type II membrane protein membrane pass occupies residues 7-26 (CLYVLTVVCWASALWYLSIT). At 27–326 (RPTSSYTGSK…DMSSKKHLRC (300 aa)) the chain is on the lumenal side. Asn47 and Asn151 each carry an N-linked (GlcNAc...) asparagine glycan.

The protein belongs to the glycosyltransferase 31 family. The cofactor is Mn(2+).

The protein resides in the golgi apparatus membrane. The catalysed reaction is an N-acetyl-beta-D-glucosaminyl derivative + UDP-alpha-D-galactose = a beta-D-galactosyl-(1-&gt;3)-N-acetyl-beta-D-glucosaminyl derivative + UDP + H(+). It catalyses the reaction a beta-D-GlcNAc-(1-&gt;3)-beta-D-Gal-(1-&gt;4)-beta-D-Glc-(1&lt;-&gt;1)-Cer(d18:1(4E)) + UDP-alpha-D-galactose = a beta-D-Gal-(1-&gt;3)-beta-D-GlcNAc-(1-&gt;3)-beta-D-Gal-(1-&gt;4)-beta-D-Glc-(1&lt;-&gt;1')-Cer(d18:1(4E)) + UDP + H(+). The protein operates within protein modification; protein glycosylation. Functionally, beta-1,3-galactosyltransferase that transfers galactose from UDP-galactose to substrates with a terminal beta-N-acetylglucosamine (beta-GlcNAc) residue. Involved in the biosynthesis of the carbohydrate moieties of glycolipids and glycoproteins. In Gorilla gorilla gorilla (Western lowland gorilla), this protein is Beta-1,3-galactosyltransferase 1 (B3GALT1).